We begin with the raw amino-acid sequence, 415 residues long: Phosphoglycerate kinase (415 aa).

Substrate is bound by residues 28 to 30 (DLN), Arg44, 67 to 70 (HQGR), Arg124, and Arg164. Residues Glu336 and 362–365 (GGHF) contribute to the ATP site.

This sequence belongs to the phosphoglycerate kinase family.

It localises to the cytoplasm. The catalysed reaction is (2R)-3-phosphoglycerate + ATP = (2R)-3-phospho-glyceroyl phosphate + ADP. The protein operates within carbohydrate degradation; glycolysis; pyruvate from D-glyceraldehyde 3-phosphate: step 2/5. This chain is Phosphoglycerate kinase (pgk), found in Aeropyrum pernix (strain ATCC 700893 / DSM 11879 / JCM 9820 / NBRC 100138 / K1).